A 241-amino-acid polypeptide reads, in one-letter code: Pyridoxine 5'-phosphate synthase (241 aa).

Asparagine 7 serves as a coordination point for 3-amino-2-oxopropyl phosphate. 9–10 contributes to the 1-deoxy-D-xylulose 5-phosphate binding site; sequence DH. Residue arginine 18 coordinates 3-amino-2-oxopropyl phosphate. The active-site Proton acceptor is histidine 43. 2 residues coordinate 1-deoxy-D-xylulose 5-phosphate: arginine 45 and histidine 50. Glutamate 70 functions as the Proton acceptor in the catalytic mechanism. Threonine 100 contacts 1-deoxy-D-xylulose 5-phosphate. Catalysis depends on histidine 191, which acts as the Proton donor. 3-amino-2-oxopropyl phosphate is bound by residues glycine 192 and 213–214; that span reads GH.

This sequence belongs to the PNP synthase family. Homooctamer; tetramer of dimers.

The protein resides in the cytoplasm. The enzyme catalyses 3-amino-2-oxopropyl phosphate + 1-deoxy-D-xylulose 5-phosphate = pyridoxine 5'-phosphate + phosphate + 2 H2O + H(+). It functions in the pathway cofactor biosynthesis; pyridoxine 5'-phosphate biosynthesis; pyridoxine 5'-phosphate from D-erythrose 4-phosphate: step 5/5. Catalyzes the complicated ring closure reaction between the two acyclic compounds 1-deoxy-D-xylulose-5-phosphate (DXP) and 3-amino-2-oxopropyl phosphate (1-amino-acetone-3-phosphate or AAP) to form pyridoxine 5'-phosphate (PNP) and inorganic phosphate. This Nitrosospira multiformis (strain ATCC 25196 / NCIMB 11849 / C 71) protein is Pyridoxine 5'-phosphate synthase.